Here is a 295-residue protein sequence, read N- to C-terminus: tRNA-cytidine(32) 2-sulfurtransferase (295 aa).

The PP-loop motif signature appears at 59–64 (SGGKDS). 3 residues coordinate [4Fe-4S] cluster: cysteine 134, cysteine 137, and cysteine 225.

This sequence belongs to the TtcA family. Homodimer. It depends on Mg(2+) as a cofactor. [4Fe-4S] cluster is required as a cofactor.

The protein localises to the cytoplasm. The enzyme catalyses cytidine(32) in tRNA + S-sulfanyl-L-cysteinyl-[cysteine desulfurase] + AH2 + ATP = 2-thiocytidine(32) in tRNA + L-cysteinyl-[cysteine desulfurase] + A + AMP + diphosphate + H(+). It participates in tRNA modification. Functionally, catalyzes the ATP-dependent 2-thiolation of cytidine in position 32 of tRNA, to form 2-thiocytidine (s(2)C32). The sulfur atoms are provided by the cysteine/cysteine desulfurase (IscS) system. The chain is tRNA-cytidine(32) 2-sulfurtransferase from Ruegeria sp. (strain TM1040) (Silicibacter sp.).